A 45-amino-acid polypeptide reads, in one-letter code: Putative UPF0377 protein YJL222W-B (45 aa).

It belongs to the UPF0377 family.

The protein is Putative UPF0377 protein YJL222W-B of Saccharomyces cerevisiae (strain ATCC 204508 / S288c) (Baker's yeast).